A 358-amino-acid chain; its full sequence is Presenilin hop-1 (358 aa).

Residues 1–12 (MPRTKRVYSGKT) lie on the Cytoplasmic side of the membrane. The helical transmembrane segment at 13-33 (ITGVLYPVAICMLFVAINVKL) threads the bilayer. Over 34–57 (SQPEQQEQSKVVYGLFHSYDTADS) the chain is Lumenal. Residues 58-78 (GTITLYLIGFLILTTSLGVFC) traverse the membrane as a helical segment. The Cytoplasmic segment spans residues 79 to 86 (YQMKFYKA). The chain crosses the membrane as a helical span at residues 87 to 107 (IKVYVLANSIGILLVYSVFHF). At 108-115 (QRIAEAQS) the chain is on the lumenal side. A helical membrane pass occupies residues 116 to 136 (IPVSVPTFFFLILQFGGLGIT). Residues 137–148 (CLHWKSHRRLHQ) lie on the Cytoplasmic side of the membrane. A helical membrane pass occupies residues 149 to 169 (FYLIMLAGLTAIFILNILPDW). Position 170 (Thr170) is a topological domain, lumenal. Residues 171 to 191 (VWMALTAISFWDIVAVLTPCG) form a helical membrane-spanning segment. The active site involves Asp182. The Cytoplasmic portion of the chain corresponds to 192–273 (PLKMLVETAN…EVREVEGTIR (82 aa)). Polar residues predominate over residues 221–240 (EVDSPDTTRSNSTPLTEFNN). The segment at 221-242 (EVDSPDTTRSNSTPLTEFNNSS) is disordered. The helical transmembrane segment at 274–294 (LGMGDFVFYSLMLGNTVQTCP) threads the bilayer. The active site involves Asp278. Over 295 to 297 (LPT) the chain is Lumenal. The chain crosses the membrane as a helical span at residues 298-318 (VVACFVSNLVGLTITLPIVTL). Residues 319–321 (SQT) are Cytoplasmic-facing. An intramembrane region (helical) is located at residues 322–342 (ALPALPFPLAIAAIFYFSSHI). The PAL motif lies at 324-326 (PAL). The Cytoplasmic segment spans residues 343-358 (ALTPFTDLCTSQLILI).

The protein belongs to the peptidase A22A family. As to quaternary structure, homodimer. Component of the gamma-secretase complex, a complex probably composed of the presenilin homodimer (sel-12, hop-1 or spe-4), nicastrin (aph-2), aph-1 and pen-2. As to expression, weakly expressed.

It localises to the endoplasmic reticulum membrane. Its subcellular location is the golgi apparatus membrane. Its function is as follows. Probable catalytic subunit of the gamma-secretase complex, an endoprotease complex that catalyzes the intramembrane cleavage of integral membrane proteins such as Notch receptors (lin-12 or glp-1). Probably works redundantly of lin-12, which provides more presenilin function. The protein is Presenilin hop-1 (hop-1) of Caenorhabditis elegans.